A 300-amino-acid polypeptide reads, in one-letter code: Dihydroorotate dehydrogenase B (NAD(+)), catalytic subunit (300 aa).

FMN contacts are provided by residues Ser-21 and 45–46 (KG). Substrate-binding positions include Lys-45 and 69-73 (NSIGL). The FMN site is built by Asn-99 and Asn-126. Asn-126 is a binding site for substrate. The active-site Nucleophile is Cys-129. 2 residues coordinate FMN: Lys-164 and Val-190. 191 to 192 (NT) provides a ligand contact to substrate. Residues Gly-216, 242 to 243 (GG), and 264 to 265 (GT) contribute to the FMN site.

Belongs to the dihydroorotate dehydrogenase family. Type 1 subfamily. Heterotetramer of 2 PyrK and 2 PyrD type B subunits. FMN serves as cofactor.

It is found in the cytoplasm. It carries out the reaction (S)-dihydroorotate + NAD(+) = orotate + NADH + H(+). It functions in the pathway pyrimidine metabolism; UMP biosynthesis via de novo pathway; orotate from (S)-dihydroorotate (NAD(+) route): step 1/1. Catalyzes the conversion of dihydroorotate to orotate with NAD(+) as electron acceptor. This Petrotoga mobilis (strain DSM 10674 / SJ95) protein is Dihydroorotate dehydrogenase B (NAD(+)), catalytic subunit (pyrD).